Reading from the N-terminus, the 456-residue chain is Chaperone protein dnaJ GFA2, mitochondrial (456 aa).

The N-terminal 89 residues, 1–89 (MVPSNGAKVL…RSFHGTGSSF (89 aa)), are a transit peptide targeting the mitochondrion. Positions 94–159 (DYYSVLGVSK…EKRDLYDQVG (66 aa)) constitute a J domain. The segment at 225-303 (GCSKTVTFQT…CRGARVVRGQ (79 aa)) adopts a CR-type zinc-finger fold. Zn(2+) is bound by residues C238, C241, C255, C258, C277, C280, C291, and C294. CXXCXGXG motif repeat units follow at residues 238 to 245 (CNTCGGQG), 255 to 262 (CKACNGSG), 277 to 284 (CQKCGGAG), and 291 to 298 (CKSCRGAR).

It belongs to the DnaJ family. Widely expressed.

Its subcellular location is the mitochondrion. Functionally, chaperone that may play a role in mitochondrial protein folding. Involved in female gametophyte development. Required for cell death of the synergid cells during fertilization process, and fusion of the polar nuclei during megagametogenesis. In Arabidopsis thaliana (Mouse-ear cress), this protein is Chaperone protein dnaJ GFA2, mitochondrial.